A 54-amino-acid polypeptide reads, in one-letter code: MTRNEIRPIVKLRSTAGTGYTYVTRKNRRNDPDRIVLRKYDPVVRRHVDFREDR.

The protein belongs to the bacterial ribosomal protein bL33 family.

The polypeptide is Large ribosomal subunit protein bL33A (Mycolicibacterium gilvum (strain PYR-GCK) (Mycobacterium gilvum (strain PYR-GCK))).